A 233-amino-acid polypeptide reads, in one-letter code: Ras-related protein Rab-20 (233 aa).

Positions 17, 18, 19, 32, and 36 each coordinate GTP. Thr19 serves as a coordination point for Mg(2+). Short sequence motifs (switch) lie at residues 28-41 (RRFP…GGAF) and 55-72 (DTAG…YCRG). Residues Thr36 and Asp55 each contribute to the Mg(2+) site. Residues Gly58, Asn113, Lys114, and Asp116 each contribute to the GTP site. Residues 119-130 (SERDTEGGEKEG) are compositionally biased toward basic and acidic residues. Positions 119–138 (SERDTEGGEKEGPASGKVGS) are disordered. Ala183 and Lys184 together coordinate GTP. 2 S-geranylgeranyl cysteine lipidation sites follow: Cys231 and Cys232.

This sequence belongs to the small GTPase superfamily. Rab family. Requires Mg(2+) as cofactor. In terms of tissue distribution, present in a variety of tissues, but not in brain.

The protein resides in the cytoplasmic vesicle. The protein localises to the phagosome. It is found in the phagosome membrane. It localises to the golgi apparatus. The enzyme catalyses GTP + H2O = GDP + phosphate + H(+). With respect to regulation, regulated by guanine nucleotide exchange factors (GEFs) which promote the exchange of bound GDP for free GTP. Regulated by GTPase activating proteins (GAPs) which increase the GTP hydrolysis activity. Inhibited by GDP dissociation inhibitors (GDIs). In terms of biological role, plays a role in apical endocytosis/recycling. Plays a role in the maturation and acidification of phagosomes that engulf pathogens, such as S.aureus and Mycobacterium. Plays a role in the fusion of phagosomes with lysosomes. This Mus musculus (Mouse) protein is Ras-related protein Rab-20.